A 283-amino-acid polypeptide reads, in one-letter code: Small ribosomal subunit protein uS2B (283 aa).

Residues 254–283 (GQVGQSAWDEEGDWNTTGAAQTSDWANTVA) are disordered. A compositionally biased stretch (polar residues) spans 267-283 (WNTTGAAQTSDWANTVA).

Belongs to the universal ribosomal protein uS2 family. In terms of assembly, component of the small ribosomal subunit. Mature ribosomes consist of a small (40S) and a large (60S) subunit. The 40S subunit contains about 33 different proteins and 1 molecule of RNA (18S). The 60S subunit contains about 49 different proteins and 3 molecules of RNA (25S, 5.8S and 5S). Interacts with rps21.

The protein resides in the cytoplasm. Functionally, required for the assembly and/or stability of the 40S ribosomal subunit. Required for the processing of the 20S rRNA-precursor to mature 18S rRNA in a late step of the maturation of 40S ribosomal subunits. The protein is Small ribosomal subunit protein uS2B (rps0b) of Schizosaccharomyces japonicus (strain yFS275 / FY16936) (Fission yeast).